The chain runs to 419 residues: Putative zinc metalloprotease SPs1691 (419 aa).

Residue H18 participates in Zn(2+) binding. E19 is an active-site residue. H22 provides a ligand contact to Zn(2+). 4 consecutive transmembrane segments (helical) span residues 169–191 (LITN…ILLV), 301–323 (LAWS…FSLN), 343–365 (LESV…LIPI), and 392–411 (AYIT…AVTW). The PDZ domain occupies 175–274 (GPMNNFILGI…LKTVAVKPQK (100 aa)).

Belongs to the peptidase M50B family. Zn(2+) serves as cofactor.

It localises to the cell membrane. The protein is Putative zinc metalloprotease SPs1691 (eep) of Streptococcus pyogenes serotype M3 (strain SSI-1).